Here is a 370-residue protein sequence, read N- to C-terminus: Dual-specificity RNA methyltransferase RlmN (370 aa).

Glu-93 acts as the Proton acceptor in catalysis. The Radical SAM core domain occupies 99-337 (EEGRGTLCVS…VTTVRKTRGD (239 aa)). A disulfide bond links Cys-106 and Cys-343. The [4Fe-4S] cluster site is built by Cys-113, Cys-117, and Cys-120. S-adenosyl-L-methionine is bound by residues 167-168 (GE), Ser-199, 221-223 (SLH), and Asn-300. Cys-343 serves as the catalytic S-methylcysteine intermediate.

This sequence belongs to the radical SAM superfamily. RlmN family. [4Fe-4S] cluster serves as cofactor.

Its subcellular location is the cytoplasm. It carries out the reaction adenosine(2503) in 23S rRNA + 2 reduced [2Fe-2S]-[ferredoxin] + 2 S-adenosyl-L-methionine = 2-methyladenosine(2503) in 23S rRNA + 5'-deoxyadenosine + L-methionine + 2 oxidized [2Fe-2S]-[ferredoxin] + S-adenosyl-L-homocysteine. It catalyses the reaction adenosine(37) in tRNA + 2 reduced [2Fe-2S]-[ferredoxin] + 2 S-adenosyl-L-methionine = 2-methyladenosine(37) in tRNA + 5'-deoxyadenosine + L-methionine + 2 oxidized [2Fe-2S]-[ferredoxin] + S-adenosyl-L-homocysteine. Specifically methylates position 2 of adenine 2503 in 23S rRNA and position 2 of adenine 37 in tRNAs. m2A2503 modification seems to play a crucial role in the proofreading step occurring at the peptidyl transferase center and thus would serve to optimize ribosomal fidelity. This chain is Dual-specificity RNA methyltransferase RlmN, found in Francisella tularensis subsp. holarctica (strain LVS).